The sequence spans 370 residues: Platelet-derived growth factor D (370 aa).

Residues Met-1 to Ala-23 form the signal peptide. The 119-residue stretch at Arg-52–Val-170 folds into the CUB domain. Residues Cys-109 and Cys-131 are joined by a disulfide bond. N-linked (GlcNAc...) asparagine glycosylation occurs at Asn-276. 2 disulfides stabilise this stretch: Cys-302–Cys-360 and Cys-306–Cys-362.

The protein belongs to the PDGF/VEGF growth factor family. As to quaternary structure, homodimer; disulfide-linked. Interacts with PDGFRB homodimers, and with heterodimers formed by PDGFRA and PDGFRB. Post-translationally, activated by proteolytic cleavage. Proteolytic removal of the N-terminal CUB domain releasing the core domain is necessary for unmasking the receptor-binding epitopes of the core domain. Cleavage after Arg-247 or Arg-249 by urokinase plasminogen activator gives rise to the active form. As to expression, widely expressed. Expressed at high levels in the kidney, adrenal glands, eye and CNS. In the kidney the localization is confined to arterial and arteriolar vascular smooth muscle cells and is also detected at low levels in the glomeruli In the eye in the anterior segment it is localized to the iris and ciliary body. In the retina localizes intensely to the outer plexiform layer, which contains photoreceptor axons and the synaptic layer between photoreceptors and second order neurons. In the spinal cord, prominently expressed in the motorneurons.

Its subcellular location is the secreted. Growth factor that plays an essential role in the regulation of embryonic development, cell proliferation, cell migration, survival and chemotaxis. Potent mitogen for cells of mesenchymal origin. Plays an important role in wound healing. Induces macrophage recruitment, increased interstitial pressure, and blood vessel maturation during angiogenesis. May play an important role in control of lens epithelial cell proliferation. Can initiate events that lead to a mesangial proliferative glomerulonephritis, including influx of monocytes and macrophages and production of extracellular matrix. The chain is Platelet-derived growth factor D (Pdgfd) from Rattus norvegicus (Rat).